The following is a 247-amino-acid chain: V-type proton ATPase subunit D (247 aa).

The protein belongs to the V-ATPase D subunit family. V-ATPase is a heteromultimeric enzyme made up of two complexes: the ATP-hydrolytic V1 complex and the proton translocation V0 complex. The V1 complex consists of three catalytic AB heterodimers that form a heterohexamer, three peripheral stalks each consisting of EG heterodimers, one central rotor including subunits D and F, and the regulatory subunits C and H. The proton translocation complex V0 consists of the proton transport subunit a, a ring of proteolipid subunits c9c'', rotary subunit d, subunits e and f, and the accessory subunits ATP6AP1/Ac45 and ATP6AP2/PRR. Interacts with SNX10.

Its subcellular location is the membrane. The protein resides in the cytoplasmic vesicle. It localises to the clathrin-coated vesicle membrane. The protein localises to the cytoplasm. It is found in the cytoskeleton. Its subcellular location is the microtubule organizing center. The protein resides in the centrosome. It localises to the cell projection. The protein localises to the cilium. Its function is as follows. Subunit of the V1 complex of vacuolar(H+)-ATPase (V-ATPase), a multisubunit enzyme composed of a peripheral complex (V1) that hydrolyzes ATP and a membrane integral complex (V0) that translocates protons. V-ATPase is responsible for acidifying and maintaining the pH of intracellular compartments and in some cell types, is targeted to the plasma membrane, where it is responsible for acidifying the extracellular environment. May play a role in cilium biogenesis through regulation of the transport and the localization of proteins to the cilium. In Mus musculus (Mouse), this protein is V-type proton ATPase subunit D (Atp6v1d).